Consider the following 330-residue polypeptide: Methionyl-tRNA formyltransferase (330 aa).

112 to 115 (SLLP) contacts (6S)-5,6,7,8-tetrahydrofolate.

Belongs to the Fmt family.

It catalyses the reaction L-methionyl-tRNA(fMet) + (6R)-10-formyltetrahydrofolate = N-formyl-L-methionyl-tRNA(fMet) + (6S)-5,6,7,8-tetrahydrofolate + H(+). Functionally, attaches a formyl group to the free amino group of methionyl-tRNA(fMet). The formyl group appears to play a dual role in the initiator identity of N-formylmethionyl-tRNA by promoting its recognition by IF2 and preventing the misappropriation of this tRNA by the elongation apparatus. This is Methionyl-tRNA formyltransferase from Alcanivorax borkumensis (strain ATCC 700651 / DSM 11573 / NCIMB 13689 / SK2).